The chain runs to 241 residues: Ribose-5-phosphate isomerase A (241 aa).

Substrate is bound by residues 29 to 32, 84 to 87, and 97 to 100; these read TGTT, DGAD, and KGGG. Glutamate 106 acts as the Proton acceptor in catalysis. A substrate-binding site is contributed by lysine 124.

It belongs to the ribose 5-phosphate isomerase family. In terms of assembly, homodimer.

The catalysed reaction is aldehydo-D-ribose 5-phosphate = D-ribulose 5-phosphate. Its pathway is carbohydrate degradation; pentose phosphate pathway; D-ribose 5-phosphate from D-ribulose 5-phosphate (non-oxidative stage): step 1/1. In terms of biological role, catalyzes the reversible conversion of ribose-5-phosphate to ribulose 5-phosphate. The sequence is that of Ribose-5-phosphate isomerase A from Thermoplasma acidophilum (strain ATCC 25905 / DSM 1728 / JCM 9062 / NBRC 15155 / AMRC-C165).